The chain runs to 183 residues: 2-epi-5-epi-valiolone epimerase (183 aa).

One can recognise a VOC domain in the interval 11–155 (AVHHVAYTVP…WGMQLELINL (145 aa)). The a divalent metal cation site is built by histidine 14, glutamate 76, histidine 99, and glutamate 151.

As to quaternary structure, homodimer. A divalent metal cation serves as cofactor.

It carries out the reaction 2-epi-5-epi-valiolone = 5-epi-valiolone. It participates in antibiotic biosynthesis. Its function is as follows. Catalyzes the epimerization of 2-epi-5-epi-valiolone to 5-epi-valiolone. Involved in cetoniacytone A biosynthesis. This Actinomyces sp protein is 2-epi-5-epi-valiolone epimerase.